An 824-amino-acid polypeptide reads, in one-letter code: Leucine--tRNA ligase (824 aa).

Positions 42-52 (PYPSGHLHMGH) match the 'HIGH' region motif. The 'KMSKS' region signature appears at 581–585 (KMSKS). Position 584 (K584) interacts with ATP.

The protein belongs to the class-I aminoacyl-tRNA synthetase family.

Its subcellular location is the cytoplasm. It catalyses the reaction tRNA(Leu) + L-leucine + ATP = L-leucyl-tRNA(Leu) + AMP + diphosphate. The sequence is that of Leucine--tRNA ligase from Syntrophomonas wolfei subsp. wolfei (strain DSM 2245B / Goettingen).